The sequence spans 214 residues: Probable nicotinate-nucleotide adenylyltransferase (214 aa).

This sequence belongs to the NadD family.

The enzyme catalyses nicotinate beta-D-ribonucleotide + ATP + H(+) = deamido-NAD(+) + diphosphate. Its pathway is cofactor biosynthesis; NAD(+) biosynthesis; deamido-NAD(+) from nicotinate D-ribonucleotide: step 1/1. Catalyzes the reversible adenylation of nicotinate mononucleotide (NaMN) to nicotinic acid adenine dinucleotide (NaAD). The sequence is that of Probable nicotinate-nucleotide adenylyltransferase from Aeromonas salmonicida (strain A449).